A 450-amino-acid chain; its full sequence is Tubulin alpha chain (450 aa).

Positions 1–4 (MREC) match the MREC motif motif. A GTP-binding site is contributed by glutamine 11. Lysine 40 is modified (N6-acetyllysine). GTP is bound by residues glutamate 71, serine 140, glycine 144, threonine 145, threonine 179, asparagine 206, and asparagine 228. A Mg(2+)-binding site is contributed by glutamate 71. Glutamate 254 is an active-site residue. Residue glutamate 444 is modified to 5-glutamyl polyglutamate.

The protein belongs to the tubulin family. In terms of assembly, dimer of alpha and beta chains. A typical microtubule is a hollow water-filled tube with an outer diameter of 25 nm and an inner diameter of 15 nM. Alpha-beta heterodimers associate head-to-tail to form protofilaments running lengthwise along the microtubule wall with the beta-tubulin subunit facing the microtubule plus end conferring a structural polarity. Microtubules usually have 13 protofilaments but different protofilament numbers can be found in some organisms and specialized cells. Mg(2+) is required as a cofactor. In terms of processing, some glutamate residues at the C-terminus are polyglycylated, resulting in polyglycine chains on the gamma-carboxyl group. Glycylation is mainly limited to tubulin incorporated into axonemes (cilia and flagella) whereas glutamylation is prevalent in neuronal cells, centrioles, axonemes, and the mitotic spindle. Both modifications can coexist on the same protein on adjacent residues, and lowering polyglycylation levels increases polyglutamylation, and reciprocally. The precise function of polyglycylation is still unclear. Post-translationally, some glutamate residues at the C-terminus are polyglutamylated, resulting in polyglutamate chains on the gamma-carboxyl group. Polyglutamylation plays a key role in microtubule severing by spastin (SPAST). SPAST preferentially recognizes and acts on microtubules decorated with short polyglutamate tails: severing activity by SPAST increases as the number of glutamates per tubulin rises from one to eight, but decreases beyond this glutamylation threshold. Acetylation of alpha chains at Lys-40 is located inside the microtubule lumen. This modification has been correlated with increased microtubule stability, intracellular transport and ciliary assembly. In terms of processing, undergoes a tyrosination/detyrosination cycle, the cyclic removal and re-addition of a C-terminal tyrosine residue by the enzymes tubulin tyrosine carboxypeptidase (MATCAP, VASH1 or VASH2) and tubulin tyrosine ligase (TTL), respectively. Post-translationally, tyrosination promotes microtubule interaction with CAP-Gly microtubule plus-end tracking proteins. Tyrosinated tubulins regulate the initiation of dynein-driven motility. Detyrosination is involved in metaphase plate congression by guiding chromosomes during mitosis. Detyrosination increases microtubules-dependent mechanotransduction in dystrophic cardiac and skeletal muscle. In cardiomyocytes, detyrosinated microtubules are required to resist to contractile compression during contraction.

Its subcellular location is the cytoplasm. The protein localises to the cytoskeleton. It carries out the reaction GTP + H2O = GDP + phosphate + H(+). Its function is as follows. Tubulin is the major constituent of microtubules, a cylinder consisting of laterally associated linear protofilaments composed of alpha- and beta-tubulin heterodimers. Microtubules grow by the addition of GTP-tubulin dimers to the microtubule end, where a stabilizing cap forms. Below the cap, tubulin dimers are in GDP-bound state, owing to GTPase activity of alpha-tubulin. The polypeptide is Tubulin alpha chain (Notophthalmus viridescens (Eastern newt)).